The primary structure comprises 60 residues: Large ribosomal subunit protein uL30 (60 aa).

It belongs to the universal ribosomal protein uL30 family. As to quaternary structure, part of the 50S ribosomal subunit.

This chain is Large ribosomal subunit protein uL30, found in Leuconostoc citreum (strain KM20).